A 754-amino-acid polypeptide reads, in one-letter code: 1,4-alpha-glucan branching enzyme GlgB (754 aa).

Residue D431 is the Nucleophile of the active site. Residue E484 is the Proton donor of the active site.

Belongs to the glycosyl hydrolase 13 family. GlgB subfamily. As to quaternary structure, monomer.

The catalysed reaction is Transfers a segment of a (1-&gt;4)-alpha-D-glucan chain to a primary hydroxy group in a similar glucan chain.. It functions in the pathway glycan biosynthesis; glycogen biosynthesis. In terms of biological role, catalyzes the formation of the alpha-1,6-glucosidic linkages in glycogen by scission of a 1,4-alpha-linked oligosaccharide from growing alpha-1,4-glucan chains and the subsequent attachment of the oligosaccharide to the alpha-1,6 position. The chain is 1,4-alpha-glucan branching enzyme GlgB from Prochlorococcus marinus (strain AS9601).